A 66-amino-acid polypeptide reads, in one-letter code: U8-myrmicitoxin-Tb1a (66 aa).

The signal sequence occupies residues 1 to 26 (MKLSFLSLAFAVIFVMAIMYAPQVEA). The propeptide occupies 27 to 50 (KASADADADADAAASADALAKASA).

As to expression, expressed by the venom gland.

The protein localises to the secreted. Its function is as follows. In vivo, this neurotoxin paralyzes about 50% of blowflies (L.caesar) one hour after intrathoracic injection, when tested at high doses (54 nmol/g). This Tetramorium bicarinatum (Tramp ant) protein is U8-myrmicitoxin-Tb1a.